The following is a 43-amino-acid chain: Protein PsbN (43 aa).

The chain crosses the membrane as a helical span at residues 4–24; that stretch reads ATIIVIFVSSLLLGITAYSIY.

Belongs to the PsbN family.

It is found in the plastid. The protein resides in the chloroplast thylakoid membrane. May play a role in photosystem I and II biogenesis. This is Protein PsbN from Trieres chinensis (Marine centric diatom).